The sequence spans 371 residues: Aminomethyltransferase (371 aa).

This sequence belongs to the GcvT family. The glycine cleavage system is composed of four proteins: P, T, L and H.

The catalysed reaction is N(6)-[(R)-S(8)-aminomethyldihydrolipoyl]-L-lysyl-[protein] + (6S)-5,6,7,8-tetrahydrofolate = N(6)-[(R)-dihydrolipoyl]-L-lysyl-[protein] + (6R)-5,10-methylene-5,6,7,8-tetrahydrofolate + NH4(+). Its function is as follows. The glycine cleavage system catalyzes the degradation of glycine. The protein is Aminomethyltransferase of Nitrosococcus oceani (strain ATCC 19707 / BCRC 17464 / JCM 30415 / NCIMB 11848 / C-107).